Reading from the N-terminus, the 371-residue chain is Histidinol-phosphate aminotransferase (371 aa).

The residue at position 228 (Lys228) is an N6-(pyridoxal phosphate)lysine.

This sequence belongs to the class-II pyridoxal-phosphate-dependent aminotransferase family. Histidinol-phosphate aminotransferase subfamily. Pyridoxal 5'-phosphate serves as cofactor.

The enzyme catalyses L-histidinol phosphate + 2-oxoglutarate = 3-(imidazol-4-yl)-2-oxopropyl phosphate + L-glutamate. The protein operates within amino-acid biosynthesis; L-histidine biosynthesis; L-histidine from 5-phospho-alpha-D-ribose 1-diphosphate: step 7/9. The polypeptide is Histidinol-phosphate aminotransferase (Methanococcus aeolicus (strain ATCC BAA-1280 / DSM 17508 / OCM 812 / Nankai-3)).